The following is a 114-amino-acid chain: Pro-FMRFamide-related neuropeptide FF (114 aa).

An N-terminal signal peptide occupies residues 1 to 21 (MDSKWAAVLLLLLLLRNWGHA). The propeptide occupies 22-69 (EEAGSWGEDQVFAEEDKGPHPSQYAHTPDRIQTPGSLMRVLLQAMERP). The disordered stretch occupies residues 29–51 (EDQVFAEEDKGPHPSQYAHTPDR). Phe82 carries the phenylalanine amide modification. Residues 85–100 (NAWGPWSKEQLSPQAR) constitute a propeptide that is removed on maturation. Phe111 carries the post-translational modification Phenylalanine amide.

Belongs to the FARP (FMRFamide related peptide) family.

It localises to the secreted. In terms of biological role, morphine modulating peptides. Have wide-ranging physiologic effects, including the modulation of morphine-induced analgesia, elevation of arterial blood pressure, and increased somatostatin secretion from the pancreas. Neuropeptide FF and SF potentiate and sensitize ASIC2 and ASIC3 channels. The sequence is that of Pro-FMRFamide-related neuropeptide FF (Npff) from Rattus norvegicus (Rat).